A 30-amino-acid chain; its full sequence is Conopeptide Vi002 (30 aa).

Expressed by the venom gland.

It localises to the secreted. This is Conopeptide Vi002 from Conus virgo (Virgin cone).